Consider the following 137-residue polypeptide: Probable calcium-binding protein CML33 (137 aa).

4 consecutive EF-hand domains span residues 1 to 36 (MNNM…LSPS), 37 to 72 (IPSE…TAQS), 76 to 111 (DVEK…LGEK), and 112 to 137 (CTVE…FVGV). D14, S16, D18, K20, and E25 together coordinate Ca(2+). Ca(2+) is bound by residues D89, N91, D93, K95, and E100.

In terms of biological role, potential calcium sensor. This chain is Probable calcium-binding protein CML33 (CML33), found in Arabidopsis thaliana (Mouse-ear cress).